The chain runs to 856 residues: MNIPDKPSLEGLEEKWSKLWKSSKIYNFELEQVSAKQDVYSIDTPPPTASGVLHIGHVFSYTHTDIIARFQRMQGKIVFYPMGWDDNGLPTERRVQNYFSVRCDPSLPYCQNLKLAQINNDSMARSISRRNFIELCQQLSEEDERKFEELWNYLGLSVDWSQTYRTIDDDAIHLSQHFFLENVNSGAAYQDWAPTLWDVTYRTAVAQAEIEERQITGFYYRLAFENENATVEIETTRPELLAGCVALVAHPDDNRYKHLFGSHVITPVFDVKVPVLPHRAAQPDKGSGIAMVCTFGDITDVQWWRDLNLQSCPIIDASGRVVPDAPDPIVSERGRRAFATLSGKTLSAAKKHTLEMLISEKSIIGEPRKITHPVKFFEKGDKPLEILLTRQWYIRNGYSDNALTERLIELGKQLQWYPKTMLRRYEDWLTGLNSDWLISRQRFLGVPFPIWYQTDDRGNAKFDDPIFPDRKDLPLDPTIAVPRGYSENQRGAPNGFVAETDVMDTWATSSLTPQLAGKYLKNPKLFEAIFPYSLRPQGQDIIRTWLFSSIIRSEYAHATAPWKSTAISGFILDPDRKKMSKSKGNAKTPKDILDRYGADAVRYWAACARLGVDTALDVENPTQIKIGRRLALKVLNAARFVVHLHKNKETYSGQPDMKRCYPIDFAAISNPLDLSLLKQLDQTIEQSTNALKNFDHSKALDTTETFFWNFCDNYVEIVKDRAYAGDESALTTLLVVTNIVIKLLAPFIPYATEEAWSWFNETSVHTQSWPETLKLHSGDIELLKIACSFMSLVRGGKTEAKLSQKTEIAYLKIALPNPEIIMPIMDDLRRAGKIDKCELIDGDAQILAIEYGEISR.

Positions 47-57 match the 'HIGH' region motif; that stretch reads PTASGVLHIGH. The short motif at 578 to 582 is the 'KMSKS' region element; sequence KMSKS. Lys581 provides a ligand contact to ATP.

This sequence belongs to the class-I aminoacyl-tRNA synthetase family. ValS type 2 subfamily. In terms of assembly, monomer.

The protein localises to the cytoplasm. The enzyme catalyses tRNA(Val) + L-valine + ATP = L-valyl-tRNA(Val) + AMP + diphosphate. In terms of biological role, catalyzes the attachment of valine to tRNA(Val). As ValRS can inadvertently accommodate and process structurally similar amino acids such as threonine, to avoid such errors, it has a 'posttransfer' editing activity that hydrolyzes mischarged Thr-tRNA(Val) in a tRNA-dependent manner. This Tropheryma whipplei (strain TW08/27) (Whipple's bacillus) protein is Valine--tRNA ligase.